Consider the following 596-residue polypeptide: Aspartate--tRNA(Asp/Asn) ligase (596 aa).

E169 is a binding site for L-aspartate. Residues 193 to 196 (QLFK) are aspartate. R215 is an L-aspartate binding site. Residues 215-217 (RDE) and Q224 each bind ATP. H447 lines the L-aspartate pocket. Position 481 (E481) interacts with ATP. Residue R488 coordinates L-aspartate. Residue 533 to 536 (GWDR) coordinates ATP. The tract at residues 559-596 (GYDPLTQAPAPITAQQRKEAGVDFKPEAKKADPGATKA) is disordered. Residues 574-590 (QRKEAGVDFKPEAKKAD) show a composition bias toward basic and acidic residues.

It belongs to the class-II aminoacyl-tRNA synthetase family. Type 1 subfamily. In terms of assembly, homodimer.

Its subcellular location is the cytoplasm. It catalyses the reaction tRNA(Asx) + L-aspartate + ATP = L-aspartyl-tRNA(Asx) + AMP + diphosphate. Its function is as follows. Aspartyl-tRNA synthetase with relaxed tRNA specificity since it is able to aspartylate not only its cognate tRNA(Asp) but also tRNA(Asn). Reaction proceeds in two steps: L-aspartate is first activated by ATP to form Asp-AMP and then transferred to the acceptor end of tRNA(Asp/Asn). The chain is Aspartate--tRNA(Asp/Asn) ligase from Arthrobacter sp. (strain FB24).